We begin with the raw amino-acid sequence, 586 residues long: 2-succinyl-5-enolpyruvyl-6-hydroxy-3-cyclohexene-1-carboxylate synthase (586 aa).

This sequence belongs to the TPP enzyme family. MenD subfamily. As to quaternary structure, homodimer. Mg(2+) is required as a cofactor. It depends on Mn(2+) as a cofactor. The cofactor is thiamine diphosphate.

It catalyses the reaction isochorismate + 2-oxoglutarate + H(+) = 5-enolpyruvoyl-6-hydroxy-2-succinyl-cyclohex-3-ene-1-carboxylate + CO2. Its pathway is quinol/quinone metabolism; 1,4-dihydroxy-2-naphthoate biosynthesis; 1,4-dihydroxy-2-naphthoate from chorismate: step 2/7. The protein operates within quinol/quinone metabolism; menaquinone biosynthesis. In terms of biological role, catalyzes the thiamine diphosphate-dependent decarboxylation of 2-oxoglutarate and the subsequent addition of the resulting succinic semialdehyde-thiamine pyrophosphate anion to isochorismate to yield 2-succinyl-5-enolpyruvyl-6-hydroxy-3-cyclohexene-1-carboxylate (SEPHCHC). The protein is 2-succinyl-5-enolpyruvyl-6-hydroxy-3-cyclohexene-1-carboxylate synthase of Natronomonas pharaonis (strain ATCC 35678 / DSM 2160 / CIP 103997 / JCM 8858 / NBRC 14720 / NCIMB 2260 / Gabara) (Halobacterium pharaonis).